The following is a 98-amino-acid chain: Acylphosphatase-1 (98 aa).

An Acylphosphatase-like domain is found at 8–98; that stretch reads SVDYEVFGKV…LEHSTFSICK (91 aa). Active-site residues include Arg23 and Asn41.

It belongs to the acylphosphatase family.

It carries out the reaction an acyl phosphate + H2O = a carboxylate + phosphate + H(+). In Xenopus tropicalis (Western clawed frog), this protein is Acylphosphatase-1 (acyp1).